The sequence spans 291 residues: N-acetylmannosamine kinase (291 aa).

ATP contacts are provided by residues 5-12 and 132-139; these read AIDIGGTK and GVGGGVVC. Residues His156, Cys166, Cys168, and Cys173 each contribute to the Zn(2+) site.

It belongs to the ROK (NagC/XylR) family. NanK subfamily. Homodimer.

It carries out the reaction an N-acyl-D-mannosamine + ATP = an N-acyl-D-mannosamine 6-phosphate + ADP + H(+). It functions in the pathway amino-sugar metabolism; N-acetylneuraminate degradation; D-fructose 6-phosphate from N-acetylneuraminate: step 2/5. Its function is as follows. Catalyzes the phosphorylation of N-acetylmannosamine (ManNAc) to ManNAc-6-P. The chain is N-acetylmannosamine kinase from Salmonella heidelberg (strain SL476).